The sequence spans 205 residues: MATDFLFPKIADCSYVSCYCEENVWKLCEQVQRTRPEELSKCYAVFVSNEGRTVPLWRQKAGRGDDQVVIWDYHVFFMHNPLPNRCLVYDLDTTLPFPTYFHKYVTETFRSDLALRPEHHRFFRVIPADTYLIEFSSDRRHMRRPDGSWIKPPPSYPPILSNTNMHCLGDFICMSAGKGPGAVYSLSEFVQYFYKSPHVVAQHNK.

Catalysis depends on residues cysteine 20, histidine 74, and aspartate 90.

It belongs to the NTAQ1 family. In terms of assembly, monomer.

It catalyses the reaction N-terminal L-glutaminyl-[protein] + H2O = N-terminal L-glutamyl-[protein] + NH4(+). Functionally, mediates the side-chain deamidation of N-terminal glutamine residues to glutamate, an important step in N-end rule pathway of protein degradation. Conversion of the resulting N-terminal glutamine to glutamate renders the protein susceptible to arginylation, polyubiquitination and degradation as specified by the N-end rule. Does not act on substrates with internal or C-terminal glutamine and does not act on non-glutamine residues in any position. The chain is Protein N-terminal glutamine amidohydrolase (tun) from Drosophila mojavensis (Fruit fly).